The primary structure comprises 253 residues: uncharacterized protein (253 aa).

Residue 6 to 30 coordinates NADP(+); it reads IITASDSGIGKECALLLAQQGFDIG. A substrate-binding site is contributed by Ser140. The Proton acceptor role is filled by Tyr153.

It belongs to the short-chain dehydrogenases/reductases (SDR) family.

This is an uncharacterized protein from Escherichia coli (strain K12).